The sequence spans 130 residues: Small ribosomal subunit protein uS9 (130 aa).

Belongs to the universal ribosomal protein uS9 family.

This chain is Small ribosomal subunit protein uS9, found in Pseudomonas paraeruginosa (strain DSM 24068 / PA7) (Pseudomonas aeruginosa (strain PA7)).